Consider the following 183-residue polypeptide: Ribosome rescue factor SmrB (183 aa).

Residues 98–173 (LDLHGLTQLQ…GDAALLVLIE (76 aa)) enclose the Smr domain.

This sequence belongs to the SmrB family. Associates with collided ribosomes, but not with correctly translating polysomes.

Its function is as follows. Acts as a ribosome collision sensor. Detects stalled/collided disomes (pairs of ribosomes where the leading ribosome is stalled and a second ribosome has collided with it) and endonucleolytically cleaves mRNA at the 5' boundary of the stalled ribosome. Stalled/collided disomes form a new interface (primarily via the 30S subunits) that binds SmrB. Cleaved mRNA becomes available for tmRNA ligation, leading to ribosomal subunit dissociation and rescue of stalled ribosomes. This Shigella sonnei (strain Ss046) protein is Ribosome rescue factor SmrB.